The following is a 79-amino-acid chain: Defensin-like protein 3 (79 aa).

Residues 1–29 (MAKFASIVALLFAALVVFAAFEAPTVVEA) form the signal peptide. Disulfide bonds link cysteine 32-cysteine 79, cysteine 43-cysteine 64, cysteine 49-cysteine 73, and cysteine 53-cysteine 75.

It belongs to the DEFL family.

The protein resides in the secreted. Functionally, possesses antifungal activity sensitive to inorganic cations. In Raphanus sativus (Radish), this protein is Defensin-like protein 3 (AFP3).